The primary structure comprises 186 residues: Peptidyl-tRNA hydrolase (186 aa).

Y14 is a binding site for tRNA. H19 serves as the catalytic Proton acceptor. TRNA is bound by residues Y64, N66, and N112.

This sequence belongs to the PTH family. In terms of assembly, monomer.

The protein localises to the cytoplasm. It carries out the reaction an N-acyl-L-alpha-aminoacyl-tRNA + H2O = an N-acyl-L-amino acid + a tRNA + H(+). In terms of biological role, hydrolyzes ribosome-free peptidyl-tRNAs (with 1 or more amino acids incorporated), which drop off the ribosome during protein synthesis, or as a result of ribosome stalling. Its function is as follows. Catalyzes the release of premature peptidyl moieties from peptidyl-tRNA molecules trapped in stalled 50S ribosomal subunits, and thus maintains levels of free tRNAs and 50S ribosomes. The polypeptide is Peptidyl-tRNA hydrolase (Bacillus cereus (strain ATCC 14579 / DSM 31 / CCUG 7414 / JCM 2152 / NBRC 15305 / NCIMB 9373 / NCTC 2599 / NRRL B-3711)).